The following is a 371-amino-acid chain: tRNA-specific 2-thiouridylase MnmA (371 aa).

ATP is bound by residues 13-20 and Met-39; that span reads GMSGGVDS. Positions 99–101 are interaction with target base in tRNA; it reads NPD. The active-site Nucleophile is the Cys-104. Cys-104 and Cys-200 are joined by a disulfide. ATP is bound at residue Gly-128. The interval 150–152 is interaction with tRNA; the sequence is KDQ. The active-site Cysteine persulfide intermediate is the Cys-200. Residues 309–310 form an interaction with tRNA region; sequence RY.

The protein belongs to the MnmA/TRMU family.

The protein localises to the cytoplasm. It catalyses the reaction S-sulfanyl-L-cysteinyl-[protein] + uridine(34) in tRNA + AH2 + ATP = 2-thiouridine(34) in tRNA + L-cysteinyl-[protein] + A + AMP + diphosphate + H(+). Functionally, catalyzes the 2-thiolation of uridine at the wobble position (U34) of tRNA, leading to the formation of s(2)U34. The polypeptide is tRNA-specific 2-thiouridylase MnmA (Bacillus velezensis (strain DSM 23117 / BGSC 10A6 / LMG 26770 / FZB42) (Bacillus amyloliquefaciens subsp. plantarum)).